We begin with the raw amino-acid sequence, 445 residues long: Phosphoglucosamine mutase (445 aa).

The active-site Phosphoserine intermediate is the serine 102. Mg(2+)-binding residues include serine 102, aspartate 241, aspartate 243, and aspartate 245. A Phosphoserine modification is found at serine 102.

Belongs to the phosphohexose mutase family. Requires Mg(2+) as cofactor. Activated by phosphorylation.

It carries out the reaction alpha-D-glucosamine 1-phosphate = D-glucosamine 6-phosphate. Its function is as follows. Catalyzes the conversion of glucosamine-6-phosphate to glucosamine-1-phosphate. In Shewanella denitrificans (strain OS217 / ATCC BAA-1090 / DSM 15013), this protein is Phosphoglucosamine mutase.